The chain runs to 432 residues: Adenylosuccinate synthetase (432 aa).

GTP is bound by residues 13-19 and 41-43; these read GDEGKGK and GHT. Asp-14 acts as the Proton acceptor in catalysis. 2 residues coordinate Mg(2+): Asp-14 and Gly-41. Residues 14–17, 39–42, Thr-130, Arg-144, Gln-225, Thr-240, and Arg-304 contribute to the IMP site; these read DEGK and NAGH. His-42 functions as the Proton donor in the catalytic mechanism. 300–306 contributes to the substrate binding site; sequence ATTGRRR. Residues Arg-306, 332–334, and 415–417 contribute to the GTP site; these read KLD and STG.

The protein belongs to the adenylosuccinate synthetase family. As to quaternary structure, homodimer. It depends on Mg(2+) as a cofactor.

It is found in the cytoplasm. It catalyses the reaction IMP + L-aspartate + GTP = N(6)-(1,2-dicarboxyethyl)-AMP + GDP + phosphate + 2 H(+). Its pathway is purine metabolism; AMP biosynthesis via de novo pathway; AMP from IMP: step 1/2. In terms of biological role, plays an important role in the de novo pathway of purine nucleotide biosynthesis. Catalyzes the first committed step in the biosynthesis of AMP from IMP. In Citrobacter koseri (strain ATCC BAA-895 / CDC 4225-83 / SGSC4696), this protein is Adenylosuccinate synthetase.